The following is a 317-amino-acid chain: Ribosomal protein L11 methyltransferase (317 aa).

S-adenosyl-L-methionine contacts are provided by T158, G179, D201, and N244.

Belongs to the methyltransferase superfamily. PrmA family.

It localises to the cytoplasm. The catalysed reaction is L-lysyl-[protein] + 3 S-adenosyl-L-methionine = N(6),N(6),N(6)-trimethyl-L-lysyl-[protein] + 3 S-adenosyl-L-homocysteine + 3 H(+). In terms of biological role, methylates ribosomal protein L11. This is Ribosomal protein L11 methyltransferase from Streptococcus pyogenes serotype M18 (strain MGAS8232).